A 478-amino-acid chain; its full sequence is Multidrug resistance outer membrane protein MdtQ (478 aa).

The signal sequence occupies residues 1–21; sequence MNRDSFYPAIACFPLLLMLAG. Cys-22 carries N-palmitoyl cysteine lipidation. Cys-22 is lipidated: S-diacylglycerol cysteine.

It belongs to the outer membrane factor (OMF) (TC 1.B.17) family.

The protein resides in the cell outer membrane. Could be involved in resistance to puromycin, acriflavine and tetraphenylarsonium chloride. The sequence is that of Multidrug resistance outer membrane protein MdtQ (mdtQ) from Escherichia coli O157:H7.